The primary structure comprises 154 residues: Cytochrome c-type biogenesis protein CcmE (154 aa).

At 1-7 (MKPRQKR) the chain is on the cytoplasmic side. A helical; Signal-anchor for type II membrane protein membrane pass occupies residues 8–28 (LVLIVGIVAAVGVAAALVLNA). Residues 29–154 (FQSNLVFFYS…GETVVKETRP (126 aa)) lie on the Periplasmic side of the membrane. Positions 121 and 125 each coordinate heme. The segment at 131 to 154 (AEALQRAGASNQKLGETVVKETRP) is disordered.

This sequence belongs to the CcmE/CycJ family.

It localises to the cell inner membrane. Heme chaperone required for the biogenesis of c-type cytochromes. Transiently binds heme delivered by CcmC and transfers the heme to apo-cytochromes in a process facilitated by CcmF and CcmH. The protein is Cytochrome c-type biogenesis protein CcmE of Methylibium petroleiphilum (strain ATCC BAA-1232 / LMG 22953 / PM1).